The primary structure comprises 527 residues: Bifunctional purine biosynthesis protein PurH (527 aa).

An MGS-like domain is found at methionine 1 to valine 144.

It belongs to the PurH family.

It catalyses the reaction (6R)-10-formyltetrahydrofolate + 5-amino-1-(5-phospho-beta-D-ribosyl)imidazole-4-carboxamide = 5-formamido-1-(5-phospho-D-ribosyl)imidazole-4-carboxamide + (6S)-5,6,7,8-tetrahydrofolate. It carries out the reaction IMP + H2O = 5-formamido-1-(5-phospho-D-ribosyl)imidazole-4-carboxamide. Its pathway is purine metabolism; IMP biosynthesis via de novo pathway; 5-formamido-1-(5-phospho-D-ribosyl)imidazole-4-carboxamide from 5-amino-1-(5-phospho-D-ribosyl)imidazole-4-carboxamide (10-formyl THF route): step 1/1. It participates in purine metabolism; IMP biosynthesis via de novo pathway; IMP from 5-formamido-1-(5-phospho-D-ribosyl)imidazole-4-carboxamide: step 1/1. This is Bifunctional purine biosynthesis protein PurH from Heliobacterium modesticaldum (strain ATCC 51547 / Ice1).